Reading from the N-terminus, the 477-residue chain is Zinc metalloproteinase/disintegrin (477 aa).

A signal peptide spans Met-1–Ser-20. Positions Ile-21–Leu-187 are excised as a propeptide. A Peptidase M12B domain is found at Arg-193 to Gln-389. The Ca(2+) site is built by Glu-196 and Asp-280. 3 disulfides stabilise this stretch: Cys-304/Cys-384, Cys-344/Cys-368, and Cys-346/Cys-351. His-329 is a Zn(2+) binding site. Glu-330 is an active-site residue. Zn(2+)-binding residues include His-333 and His-339. 2 residues coordinate Ca(2+): Cys-384 and Asn-387. Positions Leu-390–Phe-404 are excised as a propeptide. The Disintegrin domain occupies Ser-396 to Ala-477. 6 disulfide bridges follow: Cys-410–Cys-425, Cys-412–Cys-420, Cys-419–Cys-442, Cys-433–Cys-439, Cys-438–Cys-463, and Cys-451–Cys-470. The Cell attachment site signature appears at Arg-455–Asp-457.

Belongs to the venom metalloproteinase (M12B) family. P-II subfamily. P-IIa sub-subfamily. As to quaternary structure, monomer. Zn(2+) serves as cofactor. As to expression, expressed by the venom gland.

The protein localises to the secreted. Its activity is regulated as follows. Inhibited by 1,10-phenanthroline and EDTA. Its function is as follows. Impairs hemostasis in the envenomed animal. Does not exhibit detectable plasminogen activating activity. Has hemagglutinating activity on red blood cells. Cleaves insulin B chain at '38-Ala-|-Leu-39' and '40-Tyr-|-Leu-41' bonds. This recombinant protein shows high inhibitory activity on collagen-induced platelet aggregation. This chain is Zinc metalloproteinase/disintegrin, found in Bothrops jararaca (Jararaca).